Reading from the N-terminus, the 172-residue chain is Biogenesis of lysosome-related organelles complex 1 subunit 6 (172 aa).

2 disordered regions span residues 1–36 (MSVP…SPDE) and 135–172 (RALK…AKRM). The stretch at 63–167 (DLQRSKQALQ…FEREKQLTAR (105 aa)) forms a coiled coil. Basic and acidic residues predominate over residues 143-164 (RQKEELEREQQREKEFEREKQL).

The protein belongs to the BLOC1S6 family. In terms of assembly, interacts with BLOC1S4 and DTNBP1/BLOC1S7. Homodimer. Component of the biogenesis of lysosome-related organelles complex 1 (BLOC-1) composed of BLOC1S1, BLOC1S2, BLOC1S3, BLOC1S4, BLOC1S5, BLOC1S6, DTNBP1/BLOC1S7 and SNAPIN/BLOC1S8. Octamer composed of one copy each BLOC1S1, BLOC1S2, BLOC1S3, BLOC1S4, BLOC1S5, BLOC1S6, DTNBP1/BLOC1S7 and SNAPIN/BLOC1S8. The BLOC-1 complex associates with the AP-3 protein complex and membrane protein cargos. Interacts with BLOC1S5, F-actin, SNAP25 isoform 1 and isoform 2, SNAP47 and STX12. Post-translationally, phosphorylated. As to expression, widely expressed.

The protein localises to the cytoplasm. Its subcellular location is the membrane. In terms of biological role, component of the BLOC-1 complex, a complex that is required for normal biogenesis of lysosome-related organelles (LRO), such as platelet dense granules and melanosomes. In concert with the AP-3 complex, the BLOC-1 complex is required to target membrane protein cargos into vesicles assembled at cell bodies for delivery into neurites and nerve terminals. The BLOC-1 complex, in association with SNARE proteins, is also proposed to be involved in neurite extension. May play a role in intracellular vesicle trafficking, particularly in the vesicle-docking and fusion process. The protein is Biogenesis of lysosome-related organelles complex 1 subunit 6 (BLOC1S6) of Homo sapiens (Human).